Reading from the N-terminus, the 569-residue chain is Dihydroxy-acid dehydratase (569 aa).

A Mg(2+)-binding site is contributed by aspartate 80. Residue cysteine 121 coordinates [2Fe-2S] cluster. Mg(2+)-binding residues include aspartate 122 and lysine 123. At lysine 123 the chain carries N6-carboxylysine. A [2Fe-2S] cluster-binding site is contributed by cysteine 194. Residue glutamate 446 participates in Mg(2+) binding. Catalysis depends on serine 472, which acts as the Proton acceptor.

The protein belongs to the IlvD/Edd family. As to quaternary structure, homodimer. [2Fe-2S] cluster serves as cofactor. Mg(2+) is required as a cofactor.

The enzyme catalyses (2R)-2,3-dihydroxy-3-methylbutanoate = 3-methyl-2-oxobutanoate + H2O. It carries out the reaction (2R,3R)-2,3-dihydroxy-3-methylpentanoate = (S)-3-methyl-2-oxopentanoate + H2O. Its pathway is amino-acid biosynthesis; L-isoleucine biosynthesis; L-isoleucine from 2-oxobutanoate: step 3/4. It functions in the pathway amino-acid biosynthesis; L-valine biosynthesis; L-valine from pyruvate: step 3/4. In terms of biological role, functions in the biosynthesis of branched-chain amino acids. Catalyzes the dehydration of (2R,3R)-2,3-dihydroxy-3-methylpentanoate (2,3-dihydroxy-3-methylvalerate) into 2-oxo-3-methylpentanoate (2-oxo-3-methylvalerate) and of (2R)-2,3-dihydroxy-3-methylbutanoate (2,3-dihydroxyisovalerate) into 2-oxo-3-methylbutanoate (2-oxoisovalerate), the penultimate precursor to L-isoleucine and L-valine, respectively. The polypeptide is Dihydroxy-acid dehydratase (Desulforudis audaxviator (strain MP104C)).